Reading from the N-terminus, the 560-residue chain is Putative ABC transporter ATP-binding protein SP_0483 (560 aa).

ABC transporter domains follow at residues 6–247 (IEWK…GIRE) and 297–528 (FRLE…ANLK). ATP is bound by residues 40–47 (GPSGSGKS) and 329–336 (GKNGAGKS).

It belongs to the ABC transporter superfamily.

The protein localises to the cell membrane. In terms of biological role, probably part of an ABC transporter complex. Responsible for energy coupling to the transport system. The chain is Putative ABC transporter ATP-binding protein SP_0483 from Streptococcus pneumoniae serotype 4 (strain ATCC BAA-334 / TIGR4).